The chain runs to 98 residues: Integration host factor subunit alpha (98 aa).

Residues 49–71 (FGNFDLRDKNQRPGRNPKTGEDI) are disordered.

Belongs to the bacterial histone-like protein family. Heterodimer of an alpha and a beta chain.

Its function is as follows. This protein is one of the two subunits of integration host factor, a specific DNA-binding protein that functions in genetic recombination as well as in transcriptional and translational control. This is Integration host factor subunit alpha from Shewanella amazonensis (strain ATCC BAA-1098 / SB2B).